Consider the following 262-residue polypeptide: Acyl-[acyl-carrier-protein]--UDP-N-acetylglucosamine O-acyltransferase (262 aa).

The protein belongs to the transferase hexapeptide repeat family. LpxA subfamily. Homotrimer.

The protein localises to the cytoplasm. It catalyses the reaction a (3R)-hydroxyacyl-[ACP] + UDP-N-acetyl-alpha-D-glucosamine = a UDP-3-O-[(3R)-3-hydroxyacyl]-N-acetyl-alpha-D-glucosamine + holo-[ACP]. It participates in glycolipid biosynthesis; lipid IV(A) biosynthesis; lipid IV(A) from (3R)-3-hydroxytetradecanoyl-[acyl-carrier-protein] and UDP-N-acetyl-alpha-D-glucosamine: step 1/6. In terms of biological role, involved in the biosynthesis of lipid A, a phosphorylated glycolipid that anchors the lipopolysaccharide to the outer membrane of the cell. This is Acyl-[acyl-carrier-protein]--UDP-N-acetylglucosamine O-acyltransferase from Burkholderia ambifaria (strain MC40-6).